Here is a 556-residue protein sequence, read N- to C-terminus: Phenylalanine--tRNA ligase beta subunit (556 aa).

Positions 278 to 354 (LTPKEFEVSF…IAYGYNNIDP (77 aa)) constitute a B5 domain. Residues Asp-332, Asp-338, Glu-341, and Asp-342 each coordinate Mg(2+).

Belongs to the phenylalanyl-tRNA synthetase beta subunit family. Type 2 subfamily. In terms of assembly, tetramer of two alpha and two beta subunits. Mg(2+) is required as a cofactor.

The protein localises to the cytoplasm. The catalysed reaction is tRNA(Phe) + L-phenylalanine + ATP = L-phenylalanyl-tRNA(Phe) + AMP + diphosphate + H(+). The protein is Phenylalanine--tRNA ligase beta subunit of Pyrococcus furiosus (strain ATCC 43587 / DSM 3638 / JCM 8422 / Vc1).